The following is a 122-amino-acid chain: MANSLLEGVFAEVKEPCSLPMLSVDMENKENGSVGVKNSMENGRPPDPADWAVMDVVNYFRTVGFEEQASAFQEQEIDGKSLLLMTRNDVLTGLQLKLGPALKIYEYHVKPLQTKHLKNNSS.

Positions 51–119 (WAVMDVVNYF…KPLQTKHLKN (69 aa)) constitute an SAM domain.

This Homo sapiens (Human) protein is Sterile alpha motif domain-containing protein 13 (SAMD13).